The primary structure comprises 172 residues: SsrA-binding protein (172 aa).

The protein belongs to the SmpB family.

The protein localises to the cytoplasm. Required for rescue of stalled ribosomes mediated by trans-translation. Binds to transfer-messenger RNA (tmRNA), required for stable association of tmRNA with ribosomes. tmRNA and SmpB together mimic tRNA shape, replacing the anticodon stem-loop with SmpB. tmRNA is encoded by the ssrA gene; the 2 termini fold to resemble tRNA(Ala) and it encodes a 'tag peptide', a short internal open reading frame. During trans-translation Ala-aminoacylated tmRNA acts like a tRNA, entering the A-site of stalled ribosomes, displacing the stalled mRNA. The ribosome then switches to translate the ORF on the tmRNA; the nascent peptide is terminated with the 'tag peptide' encoded by the tmRNA and targeted for degradation. The ribosome is freed to recommence translation, which seems to be the essential function of trans-translation. This chain is SsrA-binding protein, found in Dehalococcoides mccartyi (strain ATCC BAA-2100 / JCM 16839 / KCTC 5957 / BAV1).